The sequence spans 1027 residues: Abnormal embryogenesis protein 30 (1027 aa).

WD repeat units lie at residues 18 to 65 (RTPF…IQAV) and 70 to 109 (KLDS…VRFS). Disordered stretches follow at residues 619-655 (NDSS…ACDL) and 1005-1027 (AMDS…DDDI). 2 stretches are compositionally biased toward acidic residues: residues 625 to 647 (LEED…EPEG) and 1014 to 1027 (DNGE…DDDI).

Belongs to the APC4 family. As to quaternary structure, the APC/C is probably composed of at least 12 subunits: apc-2, apc-10, apc-11, cdc-26, emb-1, emb-27, emb-30, mat-1, mat-2, mat-3, such-1 and gfi-3.

It functions in the pathway protein modification; protein ubiquitination. Functionally, probable component of the anaphase promoting complex/cyclosome (APC/C), a cell cycle-regulated E3 ubiquitin ligase that controls progression through mitosis and the G1 phase of the cell cycle. The APC/C complex acts by mediating ubiquitination and subsequent degradation of target proteins. Developmental role in early embryogenesis and the metaphase to anaphase transition in oocyte and spermatocyte meiosis and mitosis in somatic and germ cells. Required for embryonic anterior-posterior axis formation. Negatively regulates ify-1 protein levels during meiosis I. Plays a role in regulating the abundance of glr-1 receptors in postmitotic neurons, which may in turn control animal locomotion. Involved in regulating GABA neurotransmitter release at neuromuscular junctions in GABA motor neurons. This Caenorhabditis elegans protein is Abnormal embryogenesis protein 30.